The following is a 327-amino-acid chain: Phenylalanine--tRNA ligase alpha subunit (327 aa).

Residue glutamate 252 participates in Mg(2+) binding.

The protein belongs to the class-II aminoacyl-tRNA synthetase family. Phe-tRNA synthetase alpha subunit type 1 subfamily. In terms of assembly, tetramer of two alpha and two beta subunits. Requires Mg(2+) as cofactor.

It is found in the cytoplasm. The enzyme catalyses tRNA(Phe) + L-phenylalanine + ATP = L-phenylalanyl-tRNA(Phe) + AMP + diphosphate + H(+). In Shewanella sediminis (strain HAW-EB3), this protein is Phenylalanine--tRNA ligase alpha subunit.